Here is a 1092-residue protein sequence, read N- to C-terminus: Neural cell adhesion molecule 1-B (1092 aa).

The signal sequence occupies residues 1 to 19; the sequence is MLHIKDLIWTLYFIGAAVA. Ig-like C2-type domains are found at residues 20 to 108, 113 to 202, 208 to 295, 303 to 397, and 400 to 489; these read LEVN…GTVN, QKLT…KDIQ, PPLI…EAIV, PKMT…FEVQ, and PKIR…FILV. Residues 20-705 are Extracellular-facing; sequence LEVNIVPDQG…ATSASTGLGT (686 aa). Intrachain disulfides connect Cys-41–Cys-93 and Cys-136–Cys-186. Asn-82 is a glycosylation site (N-linked (GlcNAc...) asparagine). Residues 149-153 and 158-162 contribute to the heparin site; these read RHKGK and KKDVR. N-linked (GlcNAc...) asparagine glycosylation is present at Asn-219. Cys-232 and Cys-282 are oxidised to a cystine. 5 N-linked (GlcNAc...) asparagine glycosylation sites follow: Asn-310, Asn-341, Asn-417, Asn-443, and Asn-472. The cysteines at positions 323 and 379 are disulfide-linked. A disulfide bridge connects residues Cys-420 and Cys-473. Fibronectin type-III domains lie at 493 to 592 and 595 to 691; these read TPSS…TQPV and EPSA…TAKP. A helical transmembrane segment spans residues 706-723; that stretch reads GAIVGILIVTFVLLLVVV. The Cytoplasmic segment spans residues 724 to 1092; sequence DVTCFFLNKC…TQRNVNESKA (369 aa). A compositionally biased stretch (basic and acidic residues) spans 754–784; that stretch reads KDIEEGKAAFSKDESKEPIVEVRTEEERTPN. Disordered stretches follow at residues 754–1005 and 1024–1092; these read KDIE…GGTF and TPAA…ESKA. Composition is skewed to low complexity over residues 820 to 832 and 839 to 851; these read TTVTTNSDTITET and SPTSETTTLTSST. Polar residues predominate over residues 860–871; the sequence is DSNTVQSVQATP. A compositionally biased stretch (low complexity) spans 917-929; that stretch reads PSAATSAAEPPTA. A compositionally biased stretch (polar residues) spans 968–978; sequence AQPSTVKSPTE. A compositionally biased stretch (basic and acidic residues) spans 1050–1068; the sequence is AKTEKTQVEENSKPEETDV. Residues 1080–1092 show a composition bias toward polar residues; it reads NEATQRNVNESKA.

In terms of processing, polysialylated by ST8SIA2 and ST8SIA4. Polysialylation modulates cell interactions by confering both attractive and repulsive properties that are highly regulated by ST8SIA2 and ST8SIA4. Polysialylation is formed on a-2,3-linked sialic acid of core glycans.

It localises to the cell membrane. Its function is as follows. This protein is a cell adhesion molecule involved in neuron-neuron adhesion, neurite fasciculation, outgrowth of neurites, etc. The protein is Neural cell adhesion molecule 1-B of Xenopus laevis (African clawed frog).